The primary structure comprises 164 residues: Magnesium-dependent phosphatase 1 (164 aa).

D11 functions as the Nucleophile in the catalytic mechanism. D11 contributes to the Mg(2+) binding site. Positions 12 and 13 each coordinate phosphate. D13 is a binding site for Mg(2+). The active-site Proton donor is the D13. A substrate-binding site is contributed by W20. Positions 69, 70, and 100 each coordinate phosphate. R70 contacts substrate. D123 provides a ligand contact to Mg(2+).

The protein belongs to the HAD-like hydrolase superfamily. Mg(2+) is required as a cofactor.

The enzyme catalyses O-phospho-L-tyrosyl-[protein] + H2O = L-tyrosyl-[protein] + phosphate. Its activity is regulated as follows. Inhibited by vanadate and zinc, and slightly by calcium. Magnesium-dependent phosphatase which may act as a tyrosine phosphatase. This is Magnesium-dependent phosphatase 1 (Mdp1) from Mus musculus (Mouse).